Here is a 269-residue protein sequence, read N- to C-terminus: 3-deoxy-manno-octulosonate cytidylyltransferase (269 aa).

This sequence belongs to the KdsB family.

The protein resides in the cytoplasm. The catalysed reaction is 3-deoxy-alpha-D-manno-oct-2-ulosonate + CTP = CMP-3-deoxy-beta-D-manno-octulosonate + diphosphate. Its pathway is nucleotide-sugar biosynthesis; CMP-3-deoxy-D-manno-octulosonate biosynthesis; CMP-3-deoxy-D-manno-octulosonate from 3-deoxy-D-manno-octulosonate and CTP: step 1/1. It participates in bacterial outer membrane biogenesis; lipopolysaccharide biosynthesis. Its function is as follows. Activates KDO (a required 8-carbon sugar) for incorporation into bacterial lipopolysaccharide in Gram-negative bacteria. This chain is 3-deoxy-manno-octulosonate cytidylyltransferase, found in Cupriavidus pinatubonensis (strain JMP 134 / LMG 1197) (Cupriavidus necator (strain JMP 134)).